Consider the following 103-residue polypeptide: N(4)-acetylcytidine amidohydrolase (103 aa).

The ASCH domain occupies 6-101 (ITFSQRFQDD…QTQFYVIEFK (96 aa)). The active-site Proton acceptor is the lysine 21. The active-site Nucleophile is threonine 24. The active-site Proton donor is glutamate 74.

It belongs to the N(4)-acetylcytidine amidohydrolase family.

It carries out the reaction N(4)-acetylcytidine + H2O = cytidine + acetate + H(+). The catalysed reaction is N(4)-acetyl-2'-deoxycytidine + H2O = 2'-deoxycytidine + acetate + H(+). It catalyses the reaction N(4)-acetylcytosine + H2O = cytosine + acetate + H(+). In terms of biological role, catalyzes the hydrolysis of N(4)-acetylcytidine (ac4C). This Shigella boydii serotype 4 (strain Sb227) protein is N(4)-acetylcytidine amidohydrolase (yqfB).